A 753-amino-acid chain; its full sequence is MGASATNSVTHPAFTLNVRPDNIGIITIDVVGDKVNTLKAEFADQIATILQQAHALPKLQGLVIVSGKPDSFIAGADITMIAACRTAHDARVLAQKGQSILAQIAAFPVPVVAAIHGACLGGGLELALACHSRICSLDDKTVLGLPEVQLGLLPGSGGTQRLPRLVGVSKALDMILTGKQIRPRQALKMGLVDDVVPRDILLDVAIQRAKAGWLNRRALPWQERLLSGPLGKALLFRIVRKKTLAKTRGHYPAAERIIDVVRKGLDQGGPSGYEAEARAFGELAMSPQSAALRSLFFATTSLKKETGSAATARAIHRVGVLGGGLMGGGIANVTATRAGLPVRIKDINPQGINQALKYTWDALGKRVRSKRMRPTEQQRQMMLISGSTDYRGFERVDIVVEAVFEDLSLKQQMVADIERFGAAHTIFASNTSSLPISQIAALAQRPEQVIGLHYFSPVDKMPLVEVIPHEKTSEETIATTVALARKQGKTAIVVADRAGFYVNRILAPYINEAARCLLDGEPIESVDNALVDFGFPVGPMMLLDEVGIDVATKIMPILVEQLGPRFAAPPSFDVILKDGRKGRKNGRGFYLYSNPTLHSNSTKNSSPTKNGNSPAKRNSFKWRKNKVKPVDSSIYTLLGVTPKAHLGAGVITQRCTMLMLNEAVRCLDESIIRNPRDGDIGAVFGIGFPPFLGGPFRYLDSLGADKVVQALRLLVQQYGERFEPCQRLVTMAEQQQQFYPVDANIDEVTDVAS.

An enoyl-CoA hydratase region spans residues 8–197 (SVTHPAFTLN…KMGLVDDVVP (190 aa)). The 3-hydroxyacyl-CoA dehydrogenase stretch occupies residues 313–747 (RAIHRVGVLG…FYPVDANIDE (435 aa)). The disordered stretch occupies residues 593 to 622 (SNPTLHSNSTKNSSPTKNGNSPAKRNSFKW). Residues 599-614 (SNSTKNSSPTKNGNSP) show a composition bias toward low complexity.

The protein in the N-terminal section; belongs to the enoyl-CoA hydratase/isomerase family. This sequence in the central section; belongs to the 3-hydroxyacyl-CoA dehydrogenase family. Heterotetramer of two alpha chains (FadJ) and two beta chains (FadI).

The protein resides in the cytoplasm. The enzyme catalyses a (3S)-3-hydroxyacyl-CoA = a (2E)-enoyl-CoA + H2O. The catalysed reaction is a 4-saturated-(3S)-3-hydroxyacyl-CoA = a (3E)-enoyl-CoA + H2O. It carries out the reaction a (3S)-3-hydroxyacyl-CoA + NAD(+) = a 3-oxoacyl-CoA + NADH + H(+). It catalyses the reaction (3S)-3-hydroxybutanoyl-CoA = (3R)-3-hydroxybutanoyl-CoA. The protein operates within lipid metabolism; fatty acid beta-oxidation. Its function is as follows. Catalyzes the formation of a hydroxyacyl-CoA by addition of water on enoyl-CoA. Also exhibits 3-hydroxyacyl-CoA epimerase and 3-hydroxyacyl-CoA dehydrogenase activities. The sequence is that of Fatty acid oxidation complex subunit alpha from Yersinia pseudotuberculosis serotype I (strain IP32953).